A 307-amino-acid chain; its full sequence is Low-salt glycan biosynthesis hexosyltransferase Agl10 (307 aa).

The protein belongs to the glycosyltransferase 2 family.

The protein operates within protein modification; protein glycosylation. It participates in cell surface structure biogenesis; S-layer biogenesis. Hexosyltransferase involved in N-glycan biosynthetic pathway that takes place under low-salt conditions (1.75 M instead of 3.4 M). Participates in the formation of the tetrasaccharide present at 'Asn-532' of S-layer glycoprotein Csg, consisting of a sulfated hexose, 2 hexoses and rhamnose. Involved in the addition of final rhamnose (sugar 4) of the tetrasaccharide on the dolichol phosphate carrier. The polypeptide is Low-salt glycan biosynthesis hexosyltransferase Agl10 (agl10) (Haloferax volcanii (strain ATCC 29605 / DSM 3757 / JCM 8879 / NBRC 14742 / NCIMB 2012 / VKM B-1768 / DS2) (Halobacterium volcanii)).